The sequence spans 117 residues: Large ribosomal subunit protein bL19 (117 aa).

This sequence belongs to the bacterial ribosomal protein bL19 family.

This protein is located at the 30S-50S ribosomal subunit interface and may play a role in the structure and function of the aminoacyl-tRNA binding site. In Kineococcus radiotolerans (strain ATCC BAA-149 / DSM 14245 / SRS30216), this protein is Large ribosomal subunit protein bL19.